The sequence spans 620 residues: Chaperone protein HscA homolog (620 aa).

Belongs to the heat shock protein 70 family.

Functionally, chaperone involved in the maturation of iron-sulfur cluster-containing proteins. Has a low intrinsic ATPase activity which is markedly stimulated by HscB. The chain is Chaperone protein HscA homolog from Acinetobacter baumannii (strain SDF).